Consider the following 69-residue polypeptide: Conotoxin reg3f (69 aa).

Positions 1-20 are cleaved as a signal peptide; the sequence is MMSKLGVLLTICLLLFPLSA. Positions 21-52 are excised as a propeptide; sequence LPLDGDQPADQPAERMQDISPEQNPLFHPDKR. 3 cysteine pairs are disulfide-bonded: cysteine 54–cysteine 68, cysteine 55–cysteine 66, and cysteine 60–cysteine 69. Residue cysteine 69 is modified to Cysteine amide.

Expressed by the venom duct.

The protein resides in the secreted. The polypeptide is Conotoxin reg3f (Conus regius (Crown cone)).